The following is a 570-amino-acid chain: Adenine deaminase (570 aa).

The protein belongs to the metallo-dependent hydrolases superfamily. Adenine deaminase family. The cofactor is Mn(2+).

It catalyses the reaction adenine + H2O + H(+) = hypoxanthine + NH4(+). The polypeptide is Adenine deaminase (Oleidesulfovibrio alaskensis (strain ATCC BAA-1058 / DSM 17464 / G20) (Desulfovibrio alaskensis)).